The chain runs to 144 residues: Transcription antitermination protein NusB (144 aa).

The protein belongs to the NusB family.

Its function is as follows. Involved in transcription antitermination. Required for transcription of ribosomal RNA (rRNA) genes. Binds specifically to the boxA antiterminator sequence of the ribosomal RNA (rrn) operons. The sequence is that of Transcription antitermination protein NusB from Histophilus somni (strain 129Pt) (Haemophilus somnus).